The sequence spans 316 residues: Pantothenate kinase (316 aa).

95-102 is a binding site for ATP; the sequence is GSVAVGKS.

This sequence belongs to the prokaryotic pantothenate kinase family.

Its subcellular location is the cytoplasm. The enzyme catalyses (R)-pantothenate + ATP = (R)-4'-phosphopantothenate + ADP + H(+). It participates in cofactor biosynthesis; coenzyme A biosynthesis; CoA from (R)-pantothenate: step 1/5. The protein is Pantothenate kinase of Pectobacterium carotovorum subsp. carotovorum (strain PC1).